The sequence spans 225 residues: tRNA (guanine-N(1)-)-methyltransferase (225 aa).

S-adenosyl-L-methionine is bound by residues G112 and 132–137 (IGDYVL).

This sequence belongs to the RNA methyltransferase TrmD family. As to quaternary structure, homodimer.

It is found in the cytoplasm. It carries out the reaction guanosine(37) in tRNA + S-adenosyl-L-methionine = N(1)-methylguanosine(37) in tRNA + S-adenosyl-L-homocysteine + H(+). In terms of biological role, specifically methylates guanosine-37 in various tRNAs. The polypeptide is tRNA (guanine-N(1)-)-methyltransferase (Bacteroides fragilis (strain ATCC 25285 / DSM 2151 / CCUG 4856 / JCM 11019 / LMG 10263 / NCTC 9343 / Onslow / VPI 2553 / EN-2)).